An 806-amino-acid polypeptide reads, in one-letter code: Protein bimA (806 aa).

2 TPR repeats span residues 76–109 (LGCS…WTSR) and 127–160 (AAVL…NPFM). Disordered regions lie at residues 202–348 (VLPP…HRLG), 353–372 (TVSG…QGVG), and 401–460 (REVK…ASSK). The span at 224–237 (AGTTRSDSTSTHGS) shows a compositional bias: polar residues. Positions 246 to 257 (GSTVSVASSGTG) are enriched in low complexity. A bimA domain region spans residues 260–399 (LPREGMETPG…ISSTALGVKE (140 aa)). Over residues 328 to 348 (TKFESDEGHTERDAGMGHRLG) the composition is skewed to basic and acidic residues. Over residues 408-421 (TTGNKARTTTSSNV) the composition is skewed to polar residues. A compositionally biased stretch (basic and acidic residues) spans 432-445 (HAGEIHDGDSKEYR). Over residues 446–459 (GTSSTSNGSQNASS) the composition is skewed to low complexity. TPR repeat units follow at residues 513–546 (PWVL…APSR), 581–614 (PEAW…DPHF), 616–648 (YGFT…DSRH), 649–682 (YNAW…NPSN), 684–716 (VLIC…APHS), and 751–784 (ANVH…DPKA).

This sequence belongs to the APC3/CDC27 family.

It is found in the nucleus. In terms of biological role, required for the completion of mitosis in Aspergillus nidulans. The sequence is that of Protein bimA (bimA) from Emericella nidulans (strain FGSC A4 / ATCC 38163 / CBS 112.46 / NRRL 194 / M139) (Aspergillus nidulans).